The primary structure comprises 946 residues: Protein translocase subunit SecA (946 aa).

Residues glutamine 90, 108 to 112 (GEGKT), and aspartate 509 each bind ATP.

This sequence belongs to the SecA family. Monomer and homodimer. Part of the essential Sec protein translocation apparatus which comprises SecA, SecYEG and auxiliary proteins SecDF. Other proteins may also be involved.

It localises to the cell inner membrane. The protein localises to the cellular thylakoid membrane. It is found in the cytoplasm. It carries out the reaction ATP + H2O + cellular proteinSide 1 = ADP + phosphate + cellular proteinSide 2.. In terms of biological role, part of the Sec protein translocase complex. Interacts with the SecYEG preprotein conducting channel. Has a central role in coupling the hydrolysis of ATP to the transfer of proteins into and across the cell membrane, serving as an ATP-driven molecular motor driving the stepwise translocation of polypeptide chains across the membrane. Its function is as follows. Probably participates in protein translocation into and across both the cytoplasmic and thylakoid membranes in cyanobacterial cells. The sequence is that of Protein translocase subunit SecA from Synechococcus sp. (strain RCC307).